Consider the following 72-residue polypeptide: Protein SlyX homolog (72 aa).

It belongs to the SlyX family.

The sequence is that of Protein SlyX homolog from Vibrio cholerae serotype O1 (strain ATCC 39541 / Classical Ogawa 395 / O395).